The following is a 40-amino-acid chain: Photosystem II reaction center protein J (40 aa).

Residues 10–30 form a helical membrane-spanning segment; the sequence is LWLIGTVAGILVIGLVGIFFY.

This sequence belongs to the PsbJ family. PSII is composed of 1 copy each of membrane proteins PsbA, PsbB, PsbC, PsbD, PsbE, PsbF, PsbH, PsbI, PsbJ, PsbK, PsbL, PsbM, PsbT, PsbX, PsbY, PsbZ, Psb30/Ycf12, at least 3 peripheral proteins of the oxygen-evolving complex and a large number of cofactors. It forms dimeric complexes.

The protein localises to the plastid. The protein resides in the chloroplast thylakoid membrane. Its function is as follows. One of the components of the core complex of photosystem II (PSII). PSII is a light-driven water:plastoquinone oxidoreductase that uses light energy to abstract electrons from H(2)O, generating O(2) and a proton gradient subsequently used for ATP formation. It consists of a core antenna complex that captures photons, and an electron transfer chain that converts photonic excitation into a charge separation. This Marchantia polymorpha (Common liverwort) protein is Photosystem II reaction center protein J.